Here is a 380-residue protein sequence, read N- to C-terminus: Cytochrome b (380 aa).

Transmembrane regions (helical) follow at residues 34–54, 78–99, 114–134, and 179–199; these read FGSL…LLAM, WLIR…YFHI, WNTG…GYVL, and FFAL…IHLT. Residues H84 and H98 each contribute to the heme b site. Heme b is bound by residues H183 and H197. An a ubiquinone-binding site is contributed by H202. A run of 4 helical transmembrane segments spans residues 227–247, 289–309, 321–341, and 348–368; these read LKDI…ALFS, LGGV…PFLH, ISQL…WVGS, and FIII…VLFP.

Belongs to the cytochrome b family. The cytochrome bc1 complex contains 11 subunits: 3 respiratory subunits (MT-CYB, CYC1 and UQCRFS1), 2 core proteins (UQCRC1 and UQCRC2) and 6 low-molecular weight proteins (UQCRH/QCR6, UQCRB/QCR7, UQCRQ/QCR8, UQCR10/QCR9, UQCR11/QCR10 and a cleavage product of UQCRFS1). This cytochrome bc1 complex then forms a dimer. Requires heme b as cofactor.

It localises to the mitochondrion inner membrane. Its function is as follows. Component of the ubiquinol-cytochrome c reductase complex (complex III or cytochrome b-c1 complex) that is part of the mitochondrial respiratory chain. The b-c1 complex mediates electron transfer from ubiquinol to cytochrome c. Contributes to the generation of a proton gradient across the mitochondrial membrane that is then used for ATP synthesis. This Pachyptila turtur (Fairy prion) protein is Cytochrome b (MT-CYB).